Here is a 424-residue protein sequence, read N- to C-terminus: Histidinol dehydrogenase (424 aa).

NAD(+)-binding residues include Tyr121, Gln183, and Asn206. Substrate-binding residues include Ser229, Gln251, and His254. Positions 251 and 254 each coordinate Zn(2+). Residues Glu319 and His320 each act as proton acceptor in the active site. Residues His320, Asp353, Glu407, and His412 each coordinate substrate. Asp353 serves as a coordination point for Zn(2+). His412 provides a ligand contact to Zn(2+).

This sequence belongs to the histidinol dehydrogenase family. It depends on Zn(2+) as a cofactor.

It catalyses the reaction L-histidinol + 2 NAD(+) + H2O = L-histidine + 2 NADH + 3 H(+). Its pathway is amino-acid biosynthesis; L-histidine biosynthesis; L-histidine from 5-phospho-alpha-D-ribose 1-diphosphate: step 9/9. Catalyzes the sequential NAD-dependent oxidations of L-histidinol to L-histidinaldehyde and then to L-histidine. In Geobacillus kaustophilus (strain HTA426), this protein is Histidinol dehydrogenase.